The following is a 257-amino-acid chain: Acetylglutamate kinase (257 aa).

Residues 43–44, Arg-65, and Asn-157 contribute to the substrate site; that span reads GG. ATP-binding positions include 180-185 and 208-210; these read DVSGIL and IIT.

It belongs to the acetylglutamate kinase family. ArgB subfamily. Homodimer.

The protein localises to the cytoplasm. It carries out the reaction N-acetyl-L-glutamate + ATP = N-acetyl-L-glutamyl 5-phosphate + ADP. The protein operates within amino-acid biosynthesis; L-arginine biosynthesis; N(2)-acetyl-L-ornithine from L-glutamate: step 2/4. In terms of biological role, catalyzes the ATP-dependent phosphorylation of N-acetyl-L-glutamate. This is Acetylglutamate kinase from Enterobacter sp. (strain 638).